Consider the following 525-residue polypeptide: GMP synthase [glutamine-hydrolyzing] (525 aa).

The 199-residue stretch at 9-207 folds into the Glutamine amidotransferase type-1 domain; sequence RILILDFGSQ…VSDICGCEKQ (199 aa). Residue Cys86 is the Nucleophile of the active site. Active-site residues include His181 and Glu183. A GMPS ATP-PPase domain is found at 208–400; sequence WTPAKIIDDA…LGLPYNMLYR (193 aa). 235 to 241 is a binding site for ATP; sequence SGGVDSS.

Homodimer.

It carries out the reaction XMP + L-glutamine + ATP + H2O = GMP + L-glutamate + AMP + diphosphate + 2 H(+). Its pathway is purine metabolism; GMP biosynthesis; GMP from XMP (L-Gln route): step 1/1. Its function is as follows. Catalyzes the synthesis of GMP from XMP. The polypeptide is GMP synthase [glutamine-hydrolyzing] (Idiomarina loihiensis (strain ATCC BAA-735 / DSM 15497 / L2-TR)).